Here is a 445-residue protein sequence, read N- to C-terminus: MAQFFKAKPNTSKQLSSKLSLKVTQLDHLGAGIAHHDGKIVFINGALPGETVSVQLTEQKKKFARAKLLKIDKASAQRVSPLCPHFDKCGGCDLQHLDIDAQRKHKASTLVDLVNKFAQTQAGEVCDTLSDNAWHYRRRARLATWFDKNTKHISLGFRASSSSDVVEIQSCAVLAEPLSALIPDLAFMLNQLSGKKALGHVELTQADNGNFVVLRVTKALSDKDKARLVEFANKHQVIVLLQDDDAQCEHLNGAGEQPYYGFDDNQVKLNFSPGNFIQVNAQVNQAMVSQAVEWLSPKADERVLDLFCGIGNFSLPLAKDGAEVIGVEGVQAMVEQARINAKQSGLDKVSFYHADLSADLSKEPWLGKVDKMLIDPARAGAYESMQSLKKLKPKALVYVSCNPASLARDSEVILKQGYQLKKIGLVDMFPQTHHLESMALFELKN.

The TRAM domain occupies 12-70; that stretch reads SKQLSSKLSLKVTQLDHLGAGIAHHDGKIVFINGALPGETVSVQLTEQKKKFARAKLLK. Residues C83, C89, C92, and C171 each contribute to the [4Fe-4S] cluster site. Residues Q278, F307, N312, E328, D355, and D375 each contribute to the S-adenosyl-L-methionine site. The Nucleophile role is filled by C401.

Belongs to the class I-like SAM-binding methyltransferase superfamily. RNA M5U methyltransferase family. RlmD subfamily.

It carries out the reaction uridine(1939) in 23S rRNA + S-adenosyl-L-methionine = 5-methyluridine(1939) in 23S rRNA + S-adenosyl-L-homocysteine + H(+). Catalyzes the formation of 5-methyl-uridine at position 1939 (m5U1939) in 23S rRNA. This chain is 23S rRNA (uracil(1939)-C(5))-methyltransferase RlmD, found in Shewanella halifaxensis (strain HAW-EB4).